The sequence spans 147 residues: Basic phospholipase A2 beta-bungarotoxin A1 chain (147 aa).

A signal peptide spans Met1–Ala19. A propeptide spanning residues Ala20–Leu27 is cleaved from the precursor. 6 cysteine pairs are disulfide-bonded: Cys54–Cys146, Cys56–Cys72, Cys71–Cys127, Cys78–Cys120, Cys88–Cys113, and Cys106–Cys118. Ca(2+)-binding residues include Tyr55, Gly57, and Gly59. The active site involves His75. Position 76 (Asp76) interacts with Ca(2+). Residue Asp121 is part of the active site.

The protein belongs to the phospholipase A2 family. Group I subfamily. D49 sub-subfamily. Heterodimer; disulfide-linked. The A chains have phospholipase A2 activity and the B chains show homology with the basic protease inhibitors. The A1 chain is found in beta-1 and beta-2 bungarotoxins. It depends on Ca(2+) as a cofactor. As to expression, expressed by the venom gland.

It is found in the secreted. It catalyses the reaction a 1,2-diacyl-sn-glycero-3-phosphocholine + H2O = a 1-acyl-sn-glycero-3-phosphocholine + a fatty acid + H(+). Functionally, snake venom phospholipase A2 (PLA2) that inhibits neuromuscular transmission by blocking acetylcholine release from the nerve termini. PLA2 catalyzes the calcium-dependent hydrolysis of the 2-acyl groups in 3-sn-phosphoglycerides. This Bungarus multicinctus (Many-banded krait) protein is Basic phospholipase A2 beta-bungarotoxin A1 chain.